The primary structure comprises 1178 residues: Phytochrome B (1178 aa).

Residues 1-15 (MASGSRATPTRSPSS) show a composition bias toward polar residues. The disordered stretch occupies residues 1 to 58 (MASGSRATPTRSPSSARPEAPRHAHHHHHHHSQSSGGSTSRAGGGGGGGGGGGGTAAT). Basic residues predominate over residues 23–32 (HAHHHHHHHS). Gly residues predominate over residues 42–55 (AGGGGGGGGGGGGT). One can recognise a GAF domain in the interval 267–449 (DIKLLCDTVV…AFGLQLNMEL (183 aa)). C372 contacts phytochromobilin. 2 consecutive PAS domains span residues 668–739 (VARE…LRGE) and 802–873 (DYKA…MVVI). In terms of domain architecture, Histidine kinase spans 950 to 1170 (YICQEIKNPL…LIVLELPQPR (221 aa)).

It belongs to the phytochrome family. Homodimer. In terms of processing, contains one covalently linked phytochromobilin chromophore.

Regulatory photoreceptor which exists in two forms that are reversibly interconvertible by light: the Pr form that absorbs maximally in the red region of the spectrum and the Pfr form that absorbs maximally in the far-red region. Photoconversion of Pr to Pfr induces an array of morphogenic responses, whereas reconversion of Pfr to Pr cancels the induction of those responses. Pfr controls the expression of a number of nuclear genes including those encoding the small subunit of ribulose-bisphosphate carboxylase, chlorophyll A/B binding protein, protochlorophyllide reductase, rRNA, etc. It also controls the expression of its own gene(s) in a negative feedback fashion. The polypeptide is Phytochrome B (PHYB) (Sorghum bicolor (Sorghum)).